The primary structure comprises 188 residues: Elongation factor P (188 aa).

Belongs to the elongation factor P family.

It is found in the cytoplasm. It functions in the pathway protein biosynthesis; polypeptide chain elongation. Involved in peptide bond synthesis. Stimulates efficient translation and peptide-bond synthesis on native or reconstituted 70S ribosomes in vitro. Probably functions indirectly by altering the affinity of the ribosome for aminoacyl-tRNA, thus increasing their reactivity as acceptors for peptidyl transferase. This Wolbachia sp. subsp. Brugia malayi (strain TRS) protein is Elongation factor P.